The primary structure comprises 420 residues: Deoxyribodipyrimidine photo-lyase (420 aa).

The 123-residue stretch at 2-124 (GPLLVWHRGD…PLHLLPAPHL (123 aa)) folds into the Photolyase/cryptochrome alpha/beta domain. The disordered stretch occupies residues 147-176 (APPLPPPEALPKGPEEGEIPREDPGLPLPE). The span at 159–170 (GPEEGEIPREDP) shows a compositional bias: basic and acidic residues. Y197 provides a ligand contact to FAD. Position 201 (R201) interacts with DNA. Residues 209–213 (GSRLS), W241, R248, N310, and 341–343 (DGD) contribute to the FAD site. Interaction with DNA regions lie at residues 244-251 (ELLWRDFS) and 310-311 (NR). Residue Q373 coordinates DNA.

Belongs to the DNA photolyase class-1 family. As to quaternary structure, monomer. It depends on FAD as a cofactor.

The enzyme catalyses cyclobutadipyrimidine (in DNA) = 2 pyrimidine residues (in DNA).. Functionally, involved in repair of UV radiation-induced DNA damage. Catalyzes the light-dependent monomerization (300-600 nm) of cyclobutyl pyrimidine dimers (in cis-syn configuration), which are formed between adjacent bases on the same DNA strand upon exposure to ultraviolet radiation. This chain is Deoxyribodipyrimidine photo-lyase (phr), found in Thermus thermophilus (strain ATCC 27634 / DSM 579 / HB8).